The primary structure comprises 2628 residues: Protein FMP27, mitochondrial (2628 aa).

An N-terminal signal peptide occupies residues 1–28; sequence MMFPINVLLYKWLIFAVTFLWSCKILLR. A transmembrane domain region spans residues 29 to 192; sequence KLLGINITWI…NTNLLIGEIM (164 aa). LRR repeat units follow at residues 160-182, 213-236, 271-296, 306-333, 571-596, 835-857, 1944-1967, 2101-2125, and 2303-2327; these read FDSF…IFIV, PMNL…KLLQ, IKPL…NHPE, YNVL…IFEE, NADI…LVHN, VVSL…IFGH, FDSL…FFIF, FFML…IFLK, and IGKL…ILRK.

The protein resides in the cell membrane. The protein localises to the endoplasmic reticulum membrane. Its subcellular location is the mitochondrion membrane. Functionally, tube-forming lipid transport protein which binds to phosphatidylinositols and affects phosphatidylinositol-4,5-bisphosphate (PtdIns-4,5-P2) distribution. The chain is Protein FMP27, mitochondrial from Saccharomyces cerevisiae (strain ATCC 204508 / S288c) (Baker's yeast).